Consider the following 166-residue polypeptide: Anterior gradient protein 3 (166 aa).

The N-terminal stretch at 1–21 is a signal peptide; the sequence is MMLHSALGLCLLLVTVSSNLA. Residues 163-166 carry the Prevents secretion from ER motif; that stretch reads QSEL.

The protein belongs to the AGR family. As to quaternary structure, interacts with LYPD3 and DAG1 (alphaDAG1). As to expression, expressed in the lung, in the ciliated cells of the airway epithelium. Expression increased with differentiation of airway epithelial cells. Not detected in the mucous cells. Expressed in ciliated cells in the oviduct. Also detected in stomach, colon, prostate and liver. Expressed in breast, ovary, prostate and liver cancer. Expression is associated with the level of differentiation of breast cancer (at protein level).

The protein localises to the endoplasmic reticulum. In terms of biological role, required for calcium-mediated regulation of ciliary beat frequency and mucociliary clearance in the airway. Might be involved in the regulation of intracellular calcium in tracheal epithelial cells. The sequence is that of Anterior gradient protein 3 (AGR3) from Homo sapiens (Human).